The primary structure comprises 507 residues: ATP synthase subunit alpha, chloroplastic (507 aa).

170–177 (GDRQTGKT) serves as a coordination point for ATP.

Belongs to the ATPase alpha/beta chains family. F-type ATPases have 2 components, CF(1) - the catalytic core - and CF(0) - the membrane proton channel. CF(1) has five subunits: alpha(3), beta(3), gamma(1), delta(1), epsilon(1). CF(0) has four main subunits: a, b, b' and c.

It localises to the plastid. The protein resides in the chloroplast thylakoid membrane. The enzyme catalyses ATP + H2O + 4 H(+)(in) = ADP + phosphate + 5 H(+)(out). Its function is as follows. Produces ATP from ADP in the presence of a proton gradient across the membrane. The alpha chain is a regulatory subunit. In Huperzia lucidula (Shining clubmoss), this protein is ATP synthase subunit alpha, chloroplastic.